A 146-amino-acid polypeptide reads, in one-letter code: Hemoglobin subunit beta (146 aa).

Residue V1 is modified to N-acetylvaline. Residues 2–146 form the Globin domain; sequence HLSGEEKAAV…VANALAHKYH (145 aa). At T12 the chain carries Phosphothreonine. S44 is modified (phosphoserine). An N6-acetyllysine modification is found at K59. Position 63 (H63) interacts with heme b. K82 is modified (N6-acetyllysine). Residue H92 coordinates heme b. C93 carries the S-nitrosocysteine modification. At K144 the chain carries N6-acetyllysine.

It belongs to the globin family. As to quaternary structure, heterotetramer of two alpha chains and two beta chains. Red blood cells.

In terms of biological role, involved in oxygen transport from the lung to the various peripheral tissues. The sequence is that of Hemoglobin subunit beta (HBB) from Tupaia glis (Common tree shrew).